A 183-amino-acid polypeptide reads, in one-letter code: CASP-like protein UU1 (183 aa).

At 1–33 (MEESQQQSTKFDAPPSPYVPSRVYLAQIYWKKP) the chain is on the cytoplasmic side. Residues 34–54 (AIVVLRVLQFVFSLIAFSVMA) traverse the membrane as a helical segment. Residues 55 to 72 (DLLHDVQGSIKSLSYTVA) are Extracellular-facing. Residues 73-93 (IGVLACAYALAQLSFSLWCVI) traverse the membrane as a helical segment. Residues 94–118 (RGATSSSGVTPLYQYATFICDQMST) lie on the Cytoplasmic side of the membrane. A helical transmembrane segment spans residues 119–139 (YFLISAASATATLIDVSGVCG). The Extracellular portion of the chain corresponds to 140–156 (SNGSGTNLCSRSTASVT). An N-linked (GlcNAc...) asparagine glycan is attached at Asn-141. A helical transmembrane segment spans residues 157–177 (FAFLAFLAFSASSVLTGYYLV). The Cytoplasmic portion of the chain corresponds to 178-183 (KCILKA).

The protein belongs to the Casparian strip membrane proteins (CASP) family. In terms of assembly, homodimer and heterodimers.

The protein resides in the cell membrane. The sequence is that of CASP-like protein UU1 from Selaginella moellendorffii (Spikemoss).